The chain runs to 385 residues: Serine/threonine-protein kinase H2 (385 aa).

Residues 63 to 320 (YDIKALIGTG…AGQALDHPWV (258 aa)) form the Protein kinase domain. ATP contacts are provided by residues 69-77 (IGTGSFSRV) and K92. Residues 342–367 (QRASPHSQSPGSAQSSKSHYSHKSRH) form a disordered region. Residues 344–359 (ASPHSQSPGSAQSSKS) show a composition bias toward low complexity.

Belongs to the protein kinase superfamily. CAMK Ser/Thr protein kinase family.

The catalysed reaction is L-seryl-[protein] + ATP = O-phospho-L-seryl-[protein] + ADP + H(+). It carries out the reaction L-threonyl-[protein] + ATP = O-phospho-L-threonyl-[protein] + ADP + H(+). This chain is Serine/threonine-protein kinase H2 (PSKH2), found in Homo sapiens (Human).